Here is a 505-residue protein sequence, read N- to C-terminus: Glutamate--tRNA ligase (505 aa).

Residues 12–22 carry the 'HIGH' region motif; sequence PSPTGALHIGG. A 'KMSKS' region motif is present at residues 260-264; sequence KLSKR. Residue K263 coordinates ATP.

It belongs to the class-I aminoacyl-tRNA synthetase family. Glutamate--tRNA ligase type 1 subfamily. Monomer.

The protein resides in the cytoplasm. The enzyme catalyses tRNA(Glu) + L-glutamate + ATP = L-glutamyl-tRNA(Glu) + AMP + diphosphate. In terms of biological role, catalyzes the attachment of glutamate to tRNA(Glu) in a two-step reaction: glutamate is first activated by ATP to form Glu-AMP and then transferred to the acceptor end of tRNA(Glu). This is Glutamate--tRNA ligase from Bacteroides fragilis (strain ATCC 25285 / DSM 2151 / CCUG 4856 / JCM 11019 / LMG 10263 / NCTC 9343 / Onslow / VPI 2553 / EN-2).